Consider the following 373-residue polypeptide: Anhydro-N-acetylmuramic acid kinase (373 aa).

12–19 (GTSLDGVD) lines the ATP pocket.

It belongs to the anhydro-N-acetylmuramic acid kinase family.

It carries out the reaction 1,6-anhydro-N-acetyl-beta-muramate + ATP + H2O = N-acetyl-D-muramate 6-phosphate + ADP + H(+). It functions in the pathway amino-sugar metabolism; 1,6-anhydro-N-acetylmuramate degradation. Its pathway is cell wall biogenesis; peptidoglycan recycling. Its function is as follows. Catalyzes the specific phosphorylation of 1,6-anhydro-N-acetylmuramic acid (anhMurNAc) with the simultaneous cleavage of the 1,6-anhydro ring, generating MurNAc-6-P. Is required for the utilization of anhMurNAc either imported from the medium or derived from its own cell wall murein, and thus plays a role in cell wall recycling. The chain is Anhydro-N-acetylmuramic acid kinase from Salmonella dublin (strain CT_02021853).